The following is a 908-amino-acid chain: UPF0182 protein Csac_0864 (908 aa).

7 helical membrane-spanning segments follow: residues 22-42, 62-82, 98-118, 166-186, 208-228, 253-273, and 286-306; these read FVIS…DLFL, FYVK…VFFV, ISLL…ALIA, FLFY…IVLY, HIFF…KYEM, YFRL…YFFI, and SYIG…YFVV.

This sequence belongs to the UPF0182 family.

The protein localises to the cell membrane. The sequence is that of UPF0182 protein Csac_0864 from Caldicellulosiruptor saccharolyticus (strain ATCC 43494 / DSM 8903 / Tp8T 6331).